A 461-amino-acid polypeptide reads, in one-letter code: Secreted 45 kDa protein (461 aa).

The first 27 residues, 1–27 (MKKKIISAILMSTVILSAAAPLSGVYA), serve as a signal peptide directing secretion. Residues 264-329 (SSASASSSQA…GNTNSGTSTG (66 aa)) are compositionally biased toward low complexity. The segment at 264–343 (SSASASSSQA…TTTGGSGINS (80 aa)) is disordered. Over residues 330-340 (NTGGTTTGGSG) the composition is skewed to gly residues. Positions 330–459 (NTGGTTTGGS…VSASGVTFLM (130 aa)) constitute a Peptidase C51 domain.

This chain is Secreted 45 kDa protein (usp45), found in Lactococcus lactis subsp. cremoris (strain MG1363).